We begin with the raw amino-acid sequence, 274 residues long: Ribulose-phosphate 3-epimerase, chloroplastic (274 aa).

The transit peptide at 1–39 directs the protein to the chloroplast; that stretch reads MASPSSSSSLCSTFASPRAASLGRRLAFSSPRKAFRVRA. A substrate-binding site is contributed by serine 56. A divalent metal cation-binding residues include histidine 81, aspartate 83, and histidine 114. Aspartate 83 functions as the Proton acceptor in the catalytic mechanism. Substrate contacts are provided by residues histidine 114, 192–195, 225–227, and 247–248; these read GFGG, DGG, and GS. Residue aspartate 225 coordinates a divalent metal cation. The active-site Proton donor is the aspartate 225.

It belongs to the ribulose-phosphate 3-epimerase family. As to quaternary structure, homooctamer. Co(2+) is required as a cofactor. It depends on Fe(2+) as a cofactor. Requires Mn(2+) as cofactor. The cofactor is Zn(2+).

The protein resides in the plastid. Its subcellular location is the chloroplast thylakoid membrane. It carries out the reaction D-ribulose 5-phosphate = D-xylulose 5-phosphate. Its pathway is carbohydrate biosynthesis; Calvin cycle. Its function is as follows. Catalyzes the reversible epimerization of D-ribulose 5-phosphate to D-xylulose 5-phosphate. This Oryza sativa subsp. japonica (Rice) protein is Ribulose-phosphate 3-epimerase, chloroplastic (RPE).